Here is a 203-residue protein sequence, read N- to C-terminus: Glycerol-3-phosphate acyltransferase (203 aa).

4 helical membrane passes run 6 to 26, 82 to 102, 118 to 138, and 141 to 161; these read LTLLMIVAAYLAGSVSSAVLV, AISLGLIAIAACLGHIYPVFF, APIGDDLAICLMASWVVLVLI, and YSSLAAIITALLAPLYTWWLD.

The protein belongs to the PlsY family. As to quaternary structure, probably interacts with PlsX.

It is found in the cell inner membrane. The catalysed reaction is an acyl phosphate + sn-glycerol 3-phosphate = a 1-acyl-sn-glycero-3-phosphate + phosphate. The protein operates within lipid metabolism; phospholipid metabolism. In terms of biological role, catalyzes the transfer of an acyl group from acyl-phosphate (acyl-PO(4)) to glycerol-3-phosphate (G3P) to form lysophosphatidic acid (LPA). This enzyme utilizes acyl-phosphate as fatty acyl donor, but not acyl-CoA or acyl-ACP. This chain is Glycerol-3-phosphate acyltransferase, found in Shewanella oneidensis (strain ATCC 700550 / JCM 31522 / CIP 106686 / LMG 19005 / NCIMB 14063 / MR-1).